The following is a 343-amino-acid chain: Peroxisome assembly protein 12 (343 aa).

Residues M1–S5 lie on the Peroxisomal matrix side of the membrane. A helical membrane pass occupies residues L6–R33. Residues Y34–F37 are Cytoplasmic-facing. Residues L38 to K62 traverse the membrane as a helical segment. The Peroxisomal matrix segment spans residues K63–N102. The chain crosses the membrane as a helical span at residues G103–S140. Over L141–K146 the chain is Cytoplasmic. The chain crosses the membrane as a helical span at residues Q147 to L193. At G194–H238 the chain is on the peroxisomal matrix side. Residues S239–E266 form a helical membrane-spanning segment. Topologically, residues V267–I343 are cytoplasmic. 4 residues coordinate Zn(2+): C289, C292, C309, and C312. The RING-type; degenerate zinc finger occupies C289 to N328.

The protein belongs to the pex2/pex10/pex12 family. Component of the PEX2-PEX10-PEX12 retrotranslocation channel, composed of PEX2, PEX10 and PEX12.

The protein localises to the peroxisome membrane. It functions in the pathway protein modification; protein ubiquitination. Functionally, component of a retrotranslocation channel required for peroxisome organization by mediating export of the PEX5 receptor from peroxisomes to the cytosol, thereby promoting PEX5 recycling. The retrotranslocation channel is composed of PEX2, PEX10 and PEX12; each subunit contributing transmembrane segments that coassemble into an open channel that specifically allows the passage of PEX5 through the peroxisomal membrane. PEX12 also regulates PEX5 recycling by activating the E3 ubiquitin-protein ligase activity of PEX10. When PEX5 recycling is compromised, PEX12 stimulates PEX10-mediated polyubiquitination of PEX5, leading to its subsequent degradation. The chain is Peroxisome assembly protein 12 (pex12) from Schizosaccharomyces pombe (strain 972 / ATCC 24843) (Fission yeast).